A 359-amino-acid chain; its full sequence is Phospho-N-acetylmuramoyl-pentapeptide-transferase (359 aa).

The next 10 helical transmembrane spans lie at 3-23 (QILIAVGLALAVSILLTPVLI), 55-75 (VAILAGIWVSYLGTHLVGLAL), 84-104 (GLLVLGLATALGIVGFIDDLI), 120-140 (TVGILAAALLFGVLALQFGNA), 156-176 (IATVTLAPMIFVLFCVVLVSA), 187-207 (LDGLAAGAMAMVCAAYVLITF), 231-251 (LALVAAAAAGACIGFLWWNAA), 255-275 (IFMGDTGSLALGGIIAGLSVT), 280-300 (ILAVVLGALFVAEVTSVVVQI), and 334-354 (FWLLTAIACGLGVALFYGEWL).

Belongs to the glycosyltransferase 4 family. MraY subfamily. Requires Mg(2+) as cofactor.

Its subcellular location is the cell membrane. It carries out the reaction UDP-N-acetyl-alpha-D-muramoyl-L-alanyl-gamma-D-glutamyl-meso-2,6-diaminopimeloyl-D-alanyl-D-alanine + di-trans,octa-cis-undecaprenyl phosphate = di-trans,octa-cis-undecaprenyl diphospho-N-acetyl-alpha-D-muramoyl-L-alanyl-D-glutamyl-meso-2,6-diaminopimeloyl-D-alanyl-D-alanine + UMP. It functions in the pathway cell wall biogenesis; peptidoglycan biosynthesis. Its function is as follows. Catalyzes the initial step of the lipid cycle reactions in the biosynthesis of the cell wall peptidoglycan: transfers peptidoglycan precursor phospho-MurNAc-pentapeptide from UDP-MurNAc-pentapeptide onto the lipid carrier undecaprenyl phosphate, yielding undecaprenyl-pyrophosphoryl-MurNAc-pentapeptide, known as lipid I. The sequence is that of Phospho-N-acetylmuramoyl-pentapeptide-transferase from Mycobacterium sp. (strain MCS).